Reading from the N-terminus, the 187-residue chain is Large ribosomal subunit protein uL18 (187 aa).

This sequence belongs to the universal ribosomal protein uL18 family. As to quaternary structure, part of the 50S ribosomal subunit. Interacts with proteins L5 and L21e, and attaches the 5S rRNA to the 23S rRNA. Has been cross-linked to L21e.

Its function is as follows. This is one of 5 proteins that mediate the attachment of the 5S rRNA onto the large ribosomal subunit, where it forms part of the central protuberance and stabilizes the orientation of adjacent RNA domains. This chain is Large ribosomal subunit protein uL18 (rpl18), found in Haloarcula marismortui (strain ATCC 43049 / DSM 3752 / JCM 8966 / VKM B-1809) (Halobacterium marismortui).